Here is a 151-residue protein sequence, read N- to C-terminus: D-aminoacyl-tRNA deacylase (151 aa).

The Gly-cisPro motif, important for rejection of L-amino acids signature appears at 137 to 138 (GP).

This sequence belongs to the DTD family. As to quaternary structure, homodimer.

It localises to the cytoplasm. The enzyme catalyses glycyl-tRNA(Ala) + H2O = tRNA(Ala) + glycine + H(+). It carries out the reaction a D-aminoacyl-tRNA + H2O = a tRNA + a D-alpha-amino acid + H(+). Functionally, an aminoacyl-tRNA editing enzyme that deacylates mischarged D-aminoacyl-tRNAs. Also deacylates mischarged glycyl-tRNA(Ala), protecting cells against glycine mischarging by AlaRS. Acts via tRNA-based rather than protein-based catalysis; rejects L-amino acids rather than detecting D-amino acids in the active site. By recycling D-aminoacyl-tRNA to D-amino acids and free tRNA molecules, this enzyme counteracts the toxicity associated with the formation of D-aminoacyl-tRNA entities in vivo and helps enforce protein L-homochirality. The chain is D-aminoacyl-tRNA deacylase from Fusobacterium nucleatum subsp. nucleatum (strain ATCC 25586 / DSM 15643 / BCRC 10681 / CIP 101130 / JCM 8532 / KCTC 2640 / LMG 13131 / VPI 4355).